Here is a 547-residue protein sequence, read N- to C-terminus: Solute carrier family 22 member 7 (547 aa).

The next 12 membrane-spanning stretches (helical) occupy residues 21-41 (VALL…PIFL), 145-165 (ATST…GYLS), 173-193 (LLLV…ASVS), 203-223 (LTGT…LEWL), 233-253 (VLSS…GYLI), 258-278 (WLLL…WWVP), 345-365 (ISLC…GLSL), 374-396 (VYQT…YLSV), 403-423 (LTLA…LLVS), 431-451 (TALA…AYLF), 465-485 (MGLT…AALL), and 492-512 (LPKL…LLLP). The tract at residues 521–547 (ETIQDVERKSAPSSLQEEEMPMKQVQD) is disordered.

The protein belongs to the major facilitator (TC 2.A.1) superfamily. Organic cation transporter (TC 2.A.1.19) family.

It localises to the basolateral cell membrane. Its subcellular location is the apical cell membrane. It is found in the cell membrane. It catalyses the reaction orotate(out) + L-glutamate(in) = orotate(in) + L-glutamate(out). It carries out the reaction 3',5'-cyclic GMP(in) = 3',5'-cyclic GMP(out). The enzyme catalyses GMP(in) = GMP(out). The catalysed reaction is 2'-deoxyguanosine(in) = 2'-deoxyguanosine(out). It catalyses the reaction GDP(in) = GDP(out). It carries out the reaction guanosine(in) = guanosine(out). The enzyme catalyses GTP(in) = GTP(out). The catalysed reaction is 3',5'-cyclic AMP(in) = 3',5'-cyclic AMP(out). It catalyses the reaction creatinine(in) = creatinine(out). It carries out the reaction prostaglandin E2(out) = prostaglandin E2(in). The enzyme catalyses 2-oxoglutarate(in) = 2-oxoglutarate(out). The catalysed reaction is glutarate(in) = glutarate(out). It catalyses the reaction urate(out) = urate(in). It carries out the reaction estrone 3-sulfate(out) = estrone 3-sulfate(in). Its function is as follows. Functions as a Na(+)-independent bidirectional multispecific transporter. Contributes to the renal and hepatic elimination of endogenous organic compounds from the systemic circulation into the urine and bile, respectively. Capable of transporting a wide range of purine and pyrimidine nucleobases, nucleosides and nucleotides, with cGMP, 2'deoxyguanosine and GMP being the preferred substrates. Functions as a pH- and chloride-independent cGMP bidirectional facilitative transporter that can regulate both intracellular and extracellular levels of cGMP and may be involved in cGMP signaling pathways. Mediates orotate/glutamate bidirectional exchange and most likely display a physiological role in hepatic release of glutamate into the blood. Involved in renal secretion and possible reabsorption of creatinine. Able to uptake prostaglandin E2 (PGE2) and may contribute to PGE2 renal excretion. Also transports alpha-ketoglutarate and urate. Apart from the orotate/glutamate exchange, the counterions for the uptake of other SLC22A7/OAT2 substrates remain to be identified. This is Solute carrier family 22 member 7 (SLC22A7) from Sus scrofa (Pig).